Here is a 140-residue protein sequence, read N- to C-terminus: MRWLIWTAVSTLVMLLAMTEVSASIRTPEISTKGSTSATAFRARSLSSEYNSLEKRSLRDKSSSLITESEERSIAESLANKVVNRLFKTLYKKEMTPLTFRAKMMGRDNFLVGDYKVWWDKARATGTIPKWKFQRSKSYT.

The first 24 residues, 1 to 24 (MRWLIWTAVSTLVMLLAMTEVSAS), serve as a signal peptide directing secretion. Positions 56-72 (RSLRDKSSSLITESEER) match the RxLR-dEER motif.

It belongs to the RxLR effector family.

It is found in the secreted. The protein localises to the host cell. Functionally, effector that is involved in host plant infection. Contributes to virulence during the early infection stage, by inhibiting plant defense responses induced by both PAMP-triggered immunity (PTI) and effector-triggered immunity (ETI). The protein is RxLR effector protein CRE2 of Phytophthora infestans (strain T30-4) (Potato late blight agent).